Reading from the N-terminus, the 450-residue chain is Na(+)/H(+) antiporter NhaA 2 (450 aa).

Transmembrane regions (helical) follow at residues 43-63 (VGGAVLLVASAVALVWANSPW), 86-106 (LTLGTWAADGLLAVFFLVVGL), 124-144 (ALPMAAAVGGMVVPALIFVAV), 155-175 (GWAIPTATDIAFAVAVLAVIS), 185-205 (FLLTLAVVDDLLAVTVIAVFY), 208-228 (EINLTALGLSIVPLALFALCV), 234-254 (SWWLLLPLGVATWVLMHESGV), 258-278 (VAGVLLGFTVPVLRSVAAGGP), 299-319 (VAVPVFAFFAAGVAIGGVSGL), 326-346 (PITLGIILGLVVGKPVGIFLT), 364-384 (WIDVFGVALLAGIGFTVSLLI), and 398-418 (FVKVGVLTGSLVAALIAAVLL).

This sequence belongs to the NhaA Na(+)/H(+) (TC 2.A.33) antiporter family.

It localises to the cell membrane. It carries out the reaction Na(+)(in) + 2 H(+)(out) = Na(+)(out) + 2 H(+)(in). In terms of biological role, na(+)/H(+) antiporter that extrudes sodium in exchange for external protons. The polypeptide is Na(+)/H(+) antiporter NhaA 2 (Mycobacterium sp. (strain KMS)).